We begin with the raw amino-acid sequence, 1141 residues long: Serine-aspartate repeat-containing protein E (1141 aa).

An N-terminal signal peptide occupies residues 1-52 (MINRDNKKAITKKGMISNRLNKFSIRKYTVGTASILVGTTLIFGLGNQEAKA). Residues 23–34 (FSIRKYTVGTAS) carry the YSIRK-G/S signaling motif motif. Residues 53-601 (AENTSTENAK…GDGTVKPEEK (549 aa)) are ligand binding A region. Positions 54–225 (ENTSTENAKQ…SKEELKNNPE (172 aa)) are disordered. The segment covering 61 to 75 (AKQDDATTSDNKEVV) has biased composition (basic and acidic residues). The segment covering 77–90 (EAENNSTTENDSTN) has biased composition (low complexity). Residues 92–109 (IKKETNTDSQPEAKEEST) are compositionally biased toward basic and acidic residues. Residues 110 to 126 (KSSTQQQQNNVTATTET) are compositionally biased toward low complexity. Residues 130–145 (NIEKENVKPSTDKTAT) show a composition bias toward basic and acidic residues. A compositionally biased stretch (polar residues) spans 158-207 (PNNTNNDVTTKPSTSEIQTKPTTPQESTNIENSQPQPTPSKVDNQVTDAT). The segment covering 216 to 225 (SKEELKNNPE) has biased composition (basic and acidic residues). 3 consecutive CNA-B domains span residues 602–714 (LYKI…YKEP), 715–824 (KYNL…YKTP), and 825–935 (KYSL…EEDT). The tract at residues 899-1117 (VTNTTEDDKD…GSENNGSNNA (219 aa)) is disordered. Composition is skewed to acidic residues over residues 903 to 913 (TEDDKDADGGE) and 930 to 1080 (YFEE…DSDS). Residues 1104–1108 (LPETG) carry the LPXTG sorting signal motif. Pentaglycyl murein peptidoglycan amidated threonine is present on threonine 1107. Positions 1108-1141 (GSENNGSNNATLFGGLFAALGSLLLFGRRKKQNK) are cleaved as a propeptide — removed by sortase.

This sequence belongs to the serine-aspartate repeat-containing protein (SDr) family. In terms of assembly, interacts with host complement factor H/CFAH (via C-terminus). Interacts with host complement regulator C4BPA.

The protein resides in the secreted. Its subcellular location is the cell wall. Its function is as follows. Cell surface-associated calcium-binding protein which plays an important role in adhesion and pathogenesis. Contributes to the resistance to killing by innate immune components in blood and thus attenuates bacterial clearance by interacting with host complement factor H/CFAH and modulating its activity. Also inhibits bacterial opsonization and killing by interacting with host complement regulator C4BPA and thus inhibiting classical complement pathway activation. This is Serine-aspartate repeat-containing protein E (sdrE) from Staphylococcus aureus (strain MSSA476).